A 70-amino-acid polypeptide reads, in one-letter code: Brevinin-1MT2 (70 aa).

The N-terminal stretch at methionine 1–cysteine 22 is a signal peptide. A propeptide spanning residues glutamate 23–glutamate 44 is cleaved from the precursor. Cysteine 64 and cysteine 70 are oxidised to a cystine.

It belongs to the frog skin active peptide (FSAP) family. Brevinin subfamily. Expressed by the skin glands.

It localises to the secreted. Functionally, antimicrobial peptide with activity against a variety of Gram-negative and Gram-positive bacteria and against fungi. Shows strong hemolytic activity against human erythrocytes. The protein is Brevinin-1MT2 of Amolops mantzorum (Sichuan torrent frog).